Consider the following 392-residue polypeptide: ATP phosphoribosyltransferase regulatory subunit (392 aa).

It belongs to the class-II aminoacyl-tRNA synthetase family. HisZ subfamily. As to quaternary structure, heteromultimer composed of HisG and HisZ subunits.

It localises to the cytoplasm. The protein operates within amino-acid biosynthesis; L-histidine biosynthesis; L-histidine from 5-phospho-alpha-D-ribose 1-diphosphate: step 1/9. In terms of biological role, required for the first step of histidine biosynthesis. May allow the feedback regulation of ATP phosphoribosyltransferase activity by histidine. This chain is ATP phosphoribosyltransferase regulatory subunit, found in Prochlorococcus marinus (strain MIT 9313).